The chain runs to 596 residues: Aspartic proteinase MKC7 (596 aa).

The N-terminal stretch at 1-22 is a signal peptide; the sequence is MKLSVLTFVVDALLVCSSIVDA. The propeptide occupies 23–65; the sequence is GVTDFPSLPSNEVYVKMNFQKKYGSSFENALDDTKGRTRLMTR. In terms of domain architecture, Peptidase A1 spans 81 to 468; the sequence is YSVELDIGTP…DLDNMEISMA (388 aa). The active site involves Asp99. 7 N-linked (GlcNAc...) asparagine glycosylation sites follow: Asn180, Asn190, Asn219, Asn229, Asn232, Asn286, and Asn346. The active site involves Asp360. Asn471 and Asn517 each carry an N-linked (GlcNAc...) asparagine glycan. Residues 530 to 570 show a composition bias toward low complexity; that stretch reads ATSSSSSKGQKTQTSTTALSISKSTSSTSSTGMLSPTSSSS. A disordered region spans residues 530–578; it reads ATSSSSSKGQKTQTSTTALSISKSTSSTSSTGMLSPTSSSSTRKENGGH. Asn575 is lipidated: GPI-anchor amidated asparagine. Residues 576-596 constitute a propeptide, removed in mature form; sequence GGHNLNPPFFARFITAIFHHI.

Belongs to the peptidase A1 family.

Its subcellular location is the cell membrane. It catalyses the reaction Hydrolyzes various precursor proteins with Arg or Lys in P1, and commonly Arg or Lys also in P2. The P3 amino acid is usually non-polar, but otherwise additional basic amino acids are favorable in both non-prime and prime positions.. Cleaves proteins C-terminally to the most C-terminal basic residue. Can process the alpha-mating factor precursor. Required for cell wall integrity. The chain is Aspartic proteinase MKC7 (MKC7) from Saccharomyces cerevisiae (strain ATCC 204508 / S288c) (Baker's yeast).